A 256-amino-acid chain; its full sequence is Proteasome subunit alpha (256 aa).

The disordered stretch occupies residues 235-256; sequence ELDSNGSDGNGDAPELNGGSSD.

This sequence belongs to the peptidase T1A family. The 20S proteasome core is composed of 14 alpha and 14 beta subunits that assemble into four stacked heptameric rings, resulting in a barrel-shaped structure. The two inner rings, each composed of seven catalytic beta subunits, are sandwiched by two outer rings, each composed of seven alpha subunits. The catalytic chamber with the active sites is on the inside of the barrel. Has a gated structure, the ends of the cylinder being occluded by the N-termini of the alpha-subunits. Is capped by the proteasome-associated ATPase, ARC.

Its subcellular location is the cytoplasm. It participates in protein degradation; proteasomal Pup-dependent pathway. Its activity is regulated as follows. The formation of the proteasomal ATPase ARC-20S proteasome complex, likely via the docking of the C-termini of ARC into the intersubunit pockets in the alpha-rings, may trigger opening of the gate for substrate entry. Interconversion between the open-gate and close-gate conformations leads to a dynamic regulation of the 20S proteasome proteolysis activity. Its function is as follows. Component of the proteasome core, a large protease complex with broad specificity involved in protein degradation. This chain is Proteasome subunit alpha, found in Mycolicibacterium paratuberculosis (strain ATCC BAA-968 / K-10) (Mycobacterium paratuberculosis).